The chain runs to 109 residues: MEPNSPKKIQFAVPVFQSQIAPEAAEQIRKRRPTPASLVILNEHNPPEIDDKRGPNTQGELQNASPKQRKQSVYTPPTIKGVKHLKGQNESAFPEEEEGTNEREEQRDH.

The segment at 25 to 109 (AEQIRKRRPT…TNEREEQRDH (85 aa)) is disordered. A compositionally biased stretch (basic and acidic residues) spans 45 to 54 (NPPEIDDKRG). A compositionally biased stretch (polar residues) spans 55 to 75 (PNTQGELQNASPKQRKQSVYT). The segment covering 100–109 (TNEREEQRDH) has biased composition (basic and acidic residues).

This sequence belongs to the protein phosphatase inhibitor 1 family.

It is found in the cytoplasm. Functionally, may increase cell susceptibility to TNF-induced apoptosis. In Homo sapiens (Human), this protein is Protein phosphatase 1 regulatory subunit 1C (PPP1R1C).